A 510-amino-acid chain; its full sequence is Adenosine deaminase 2 (510 aa).

The signal sequence occupies residues M1–S24. A dimerization region spans residues R25–N95. Zn(2+) is bound by residues H107 and H109. Position 110 (D110) interacts with substrate. N-linked (GlcNAc...) asparagine glycosylation is present at N122. A PRB domain region spans residues N122 to T182. C132 and C156 form a disulfide bridge. An N-linked (GlcNAc...) asparagine glycan is attached at N171. Substrate-binding positions include W201–F208, H290, and G323. Zn(2+) is bound at residue H353. The active-site Proton donor is the E356. N375 carries N-linked (GlcNAc...) asparagine glycosylation. The Proton acceptor role is filled by H381. D438 lines the Zn(2+) pocket. D439 serves as a coordination point for substrate.

It belongs to the metallo-dependent hydrolases superfamily. Adenosine and AMP deaminases family. ADGF subfamily. In terms of assembly, homodimer. Interacts with adenosine receptors. Binds heparin. Requires Zn(2+) as cofactor.

The protein localises to the secreted. The catalysed reaction is adenosine + H2O + H(+) = inosine + NH4(+). Functionally, adenosine deaminase that may contribute to the degradation of extracellular adenosine, a signaling molecule that controls a variety of cellular responses. Requires elevated adenosine levels for optimal enzyme activity. Binds to cell surfaces via proteoglycans and may play a role in the regulation of cell proliferation and differentiation, independently of its enzyme activity. This is Adenosine deaminase 2 from Sus scrofa (Pig).